Consider the following 505-residue polypeptide: ATP synthase subunit alpha (505 aa).

Position 170–177 (170–177 (GDRQTGKT)) interacts with ATP.

This sequence belongs to the ATPase alpha/beta chains family. As to quaternary structure, F-type ATPases have 2 components, CF(1) - the catalytic core - and CF(0) - the membrane proton channel. CF(1) has five subunits: alpha(3), beta(3), gamma(1), delta(1), epsilon(1). CF(0) has four main subunits: a(1), b(1), b'(1) and c(9-12).

Its subcellular location is the cellular thylakoid membrane. It carries out the reaction ATP + H2O + 4 H(+)(in) = ADP + phosphate + 5 H(+)(out). Its function is as follows. Produces ATP from ADP in the presence of a proton gradient across the membrane. The alpha chain is a regulatory subunit. In Synechococcus sp. (strain ATCC 27144 / PCC 6301 / SAUG 1402/1) (Anacystis nidulans), this protein is ATP synthase subunit alpha.